The primary structure comprises 535 residues: Dual specificity calcium/calmodulin-dependent 3',5'-cyclic nucleotide phosphodiesterase 1A (535 aa).

Calmodulin-binding regions lie at residues 24–44 and 114–137; these read TEKMWQRLKGILRCLVKQLER and EKPKFRSIVHAVQAGIFVERMYRK. Residues 142 to 522 form the PDEase domain; that stretch reads VGLAYPAAVI…ERWKELAAQE (381 aa). The Proton donor role is filled by histidine 219. Residues histidine 223, histidine 259, aspartate 260, and aspartate 366 each coordinate Zn(2+). A Mg(2+)-binding site is contributed by aspartate 260.

The protein belongs to the cyclic nucleotide phosphodiesterase family. PDE1 subfamily. As to quaternary structure, homodimer. Interacts with YWHAZ. The cofactor is Zn(2+). Requires Mg(2+) as cofactor. As to expression, several tissues, including brain, kidney, testes and heart.

The catalysed reaction is a nucleoside 3',5'-cyclic phosphate + H2O = a nucleoside 5'-phosphate + H(+). The enzyme catalyses 3',5'-cyclic GMP + H2O = GMP + H(+). It carries out the reaction 3',5'-cyclic AMP + H2O = AMP + H(+). With respect to regulation, type I PDE are activated by the binding of calmodulin in the presence of Ca(2+). Calcium/calmodulin-dependent cyclic nucleotide phosphodiesterase with a dual specificity for the second messengers cGMP and cAMP, which are key regulators of many important physiological processes. Has a higher efficiency with cGMP compared to cAMP. The sequence is that of Dual specificity calcium/calmodulin-dependent 3',5'-cyclic nucleotide phosphodiesterase 1A from Homo sapiens (Human).